A 1160-amino-acid polypeptide reads, in one-letter code: DNA polymerase III subunit alpha (1160 aa).

It is found in the cytoplasm. It catalyses the reaction DNA(n) + a 2'-deoxyribonucleoside 5'-triphosphate = DNA(n+1) + diphosphate. Functionally, DNA polymerase III is a complex, multichain enzyme responsible for most of the replicative synthesis in bacteria. This DNA polymerase also exhibits 3' to 5' exonuclease activity. The alpha chain is the DNA polymerase. This chain is DNA polymerase III subunit alpha (dnaE), found in Escherichia coli O6:H1 (strain CFT073 / ATCC 700928 / UPEC).